Consider the following 272-residue polypeptide: HMP-PP phosphatase (272 aa).

The Nucleophile role is filled by Asp8. Mg(2+) contacts are provided by Asp8, Asp10, and Asp212.

The protein belongs to the HAD-like hydrolase superfamily. Cof family. Mg(2+) is required as a cofactor.

The catalysed reaction is 4-amino-2-methyl-5-(diphosphooxymethyl)pyrimidine + H2O = 4-amino-2-methyl-5-(phosphooxymethyl)pyrimidine + phosphate + H(+). In terms of biological role, catalyzes the hydrolysis of 4-amino-2-methyl-5-hydroxymethylpyrimidine pyrophosphate (HMP-PP) to 4-amino-2-methyl-5-hydroxymethylpyrimidine phosphate (HMP-P). This is HMP-PP phosphatase from Salmonella typhi.